The primary structure comprises 301 residues: Putative carboxypeptidase slr1534 (301 aa).

The active-site Nucleophile is the serine 116. Catalysis depends on charge relay system residues glutamate 206 and histidine 276.

Belongs to the peptidase S66 family.

In Synechocystis sp. (strain ATCC 27184 / PCC 6803 / Kazusa), this protein is Putative carboxypeptidase slr1534.